The sequence spans 396 residues: Elongation factor Tu 1 (396 aa).

The tr-type G domain occupies 10–206 (KPHINVGTIG…AMDAHIPQPE (197 aa)). Residues 19–26 (GHVDHGKT) are G1. 19–26 (GHVDHGKT) is a GTP binding site. Mg(2+) is bound at residue threonine 26. Residues 60-64 (GITIA) form a G2 region. The interval 81 to 84 (DCPG) is G3. GTP is bound by residues 81–85 (DCPGH) and 136–139 (NKAD). The segment at 136–139 (NKAD) is G4. The G5 stretch occupies residues 174–176 (SAL).

This sequence belongs to the TRAFAC class translation factor GTPase superfamily. Classic translation factor GTPase family. EF-Tu/EF-1A subfamily. In terms of assembly, monomer.

The protein localises to the cytoplasm. It carries out the reaction GTP + H2O = GDP + phosphate + H(+). Its function is as follows. GTP hydrolase that promotes the GTP-dependent binding of aminoacyl-tRNA to the A-site of ribosomes during protein biosynthesis. The chain is Elongation factor Tu 1 from Halorhodospira halophila (strain DSM 244 / SL1) (Ectothiorhodospira halophila (strain DSM 244 / SL1)).